Reading from the N-terminus, the 389-residue chain is MATLFMKLVSFFLILSTFCLTTVNSEPQCHNFKSIISFGDSIADTGNLLALSDPTNLPKVAFLPYGETFFHHPTGRFSNGRLIIDFIAEFLGFPLVPPFYGSQNANFEKGVNFAVGGATALERSFLEERGIHFPYTNVSLAVQLSSFKESLPNLCVSPSDCRDMIENSLILMGEIGGNDYNYAFFVGKNIEEIKELVPLVIETISSAITELIGMGGKTFLVPGEFPLGCSVAYLSLYQTSNIEEYDPLTGCLKWLNKFSEYHDEQLQAELNRLQKLYPHVNIIYADYYNTLLRLAQEPAKFGFISRPLPACCALGGPFNFTLGRKRGTQVPECCDDPSKYVSWDGVHMTEAAYRLMAEGILKGPYAIPPFDWSCLSSEIKNTQNSLMNN.

The N-terminal stretch at Met1–Ser25 is a signal peptide. Ser41 acts as the Nucleophile in catalysis. N-linked (GlcNAc...) asparagine glycosylation is found at Asn137 and Asn319. Active-site residues include Asp344 and His347.

It belongs to the 'GDSL' lipolytic enzyme family.

Its subcellular location is the secreted. The chain is GDSL esterase/lipase At1g28570 from Arabidopsis thaliana (Mouse-ear cress).